We begin with the raw amino-acid sequence, 116 residues long: Large ribosomal subunit protein bL19 (116 aa).

This sequence belongs to the bacterial ribosomal protein bL19 family.

Its function is as follows. This protein is located at the 30S-50S ribosomal subunit interface and may play a role in the structure and function of the aminoacyl-tRNA binding site. This chain is Large ribosomal subunit protein bL19, found in Pseudomonas entomophila (strain L48).